The sequence spans 505 residues: Deoxyguanosinetriphosphate triphosphohydrolase (505 aa).

One can recognise an HD domain in the interval 66 to 273 (RLTHSMEVQQ…MEAADDISYC (208 aa)).

It belongs to the dGTPase family. Type 1 subfamily. Homotetramer. Mg(2+) serves as cofactor.

It catalyses the reaction dGTP + H2O = 2'-deoxyguanosine + triphosphate + H(+). In terms of biological role, dGTPase preferentially hydrolyzes dGTP over the other canonical NTPs. This chain is Deoxyguanosinetriphosphate triphosphohydrolase, found in Salmonella typhimurium (strain LT2 / SGSC1412 / ATCC 700720).